We begin with the raw amino-acid sequence, 218 residues long: Protein N-lysine methyltransferase METTL21A (218 aa).

S-adenosyl-L-methionine contacts are provided by residues Trp47, 73–75, Asp94, Trp125, and Ala143; that span reads GAG.

This sequence belongs to the methyltransferase superfamily. METTL21 family. As to quaternary structure, interacts with heat shock protein 70 family members; at least some of these proteins are methylation substrates.

The protein resides in the cytoplasm. It carries out the reaction L-lysyl-[protein] + 3 S-adenosyl-L-methionine = N(6),N(6),N(6)-trimethyl-L-lysyl-[protein] + 3 S-adenosyl-L-homocysteine + 3 H(+). In terms of biological role, protein-lysine methyltransferase that selectively trimethylates residues in heat shock protein 70 (HSP70) family members. Contributes to the in vivo trimethylation of Lys residues in HSPA1 and HSPA8. In vitro methylates 'Lys-561' in HSPA1, 'Lys-564' in HSPA2, 'Lys-585' in HSPA5, 'Lys-563' in HSPA6 and 'Lys-561' in HSPA8. This Homo sapiens (Human) protein is Protein N-lysine methyltransferase METTL21A (METTL21A).